The chain runs to 54 residues: Potassium channel toxin alpha-KTx 14.5 (54 aa).

The signal sequence occupies residues 1 to 23; that stretch reads MKIFFAILLILAVCSMAIWTVNG. 3 disulfide bridges follow: Cys-30/Cys-46, Cys-36/Cys-51, and Cys-40/Cys-53.

The protein belongs to the short scorpion toxin superfamily. Potassium channel inhibitor family. Alpha-KTx 14 subfamily. In terms of tissue distribution, expressed by the venom gland.

Its subcellular location is the secreted. Functionally, inhibits potassium channels. May be active towards small conductance calcium-activated potassium channels (KCNN, SK), and less active towards voltage-gated potassium channels (Kv/KCN). In Mesobuthus gibbosus (Mediterranean checkered scorpion), this protein is Potassium channel toxin alpha-KTx 14.5.